The primary structure comprises 835 residues: Involucrin (835 aa).

Positions 1 to 15 (MSQQHTLPVTLSPAL) are enriched in polar residues. 8 disordered regions span residues 1–133 (MSQQ…LDQR), 150–206 (EQLL…LEVP), 221–285 (GQLK…QLKH), 321–342 (GQLK…QEGQ), 381–428 (GQLK…VPEE), 446–486 (LDQQ…LEVP), 501–548 (GQLK…VPEE), and 566–809 (LDQQ…QPAL). Low complexity predominate over residues 76-91 (EQQQQEPQEQELQQQH). Basic and acidic residues-rich tracts occupy residues 92 to 115 (WEQH…KAQR) and 159 to 168 (QEQHLKHLEQ). The span at 169 to 181 (QEGQLELPEQQEG) shows a compositional bias: low complexity. Composition is skewed to basic and acidic residues over residues 182 to 198 (QLKH…HLEQ) and 222 to 268 (QLKH…HLDQ). 3 stretches are compositionally biased toward low complexity: residues 269–281 (QEGQ…QQEG), 329–341 (QEGQ…QQEG), and 389–401 (QEGQ…QQEG). Composition is skewed to basic and acidic residues over residues 402 to 421 (QLKH…HQEG) and 446 to 464 (LDQQ…KQLE). Low complexity predominate over residues 509–521 (QEGQLELPEQQEG). Composition is skewed to basic and acidic residues over residues 522–541 (QLKH…HQEG), 566–584 (LDQQ…KQLE), and 594–620 (KHLE…EHQE). Low complexity predominate over residues 655–668 (HLVQQEGQLEQQEG). Residues 669–685 (QVEHLEEQVGQLKHLEE) are compositionally biased toward basic and acidic residues. The segment covering 693–710 (LEQQQGQLEVPEQQVGQP) has biased composition (low complexity). 3 stretches are compositionally biased toward basic and acidic residues: residues 711-721 (KHLEQEEKQLE), 729-738 (QLKHLEKQEA), and 751-775 (KHLE…HLEQ). Polar residues predominate over residues 776-789 (QEGQLKNLEQQKGQ).

Belongs to the involucrin family. As to quaternary structure, directly or indirectly cross-linked to cornifelin (CNFN). In terms of processing, substrate of transglutaminase. Specific glutamines or lysines are cross-linked to keratins, desmoplakin and to inter involucrin molecules. Keratinocytes of epidermis and other stratified squamous epithelia.

The protein resides in the cytoplasm. In terms of biological role, part of the insoluble cornified cell envelope (CE) of stratified squamous epithelia. The polypeptide is Involucrin (IVL) (Pongo pygmaeus (Bornean orangutan)).